Reading from the N-terminus, the 72-residue chain is DNA-directed RNA polymerase subunit epsilon (72 aa).

It belongs to the RNA polymerase subunit epsilon family. As to quaternary structure, RNAP is composed of a core of 2 alpha, a beta and a beta' subunit. The core is associated with a delta subunit, and at least one of epsilon or omega. When a sigma factor is associated with the core the holoenzyme is formed, which can initiate transcription.

It catalyses the reaction RNA(n) + a ribonucleoside 5'-triphosphate = RNA(n+1) + diphosphate. A non-essential component of RNA polymerase (RNAP). The chain is DNA-directed RNA polymerase subunit epsilon from Staphylococcus haemolyticus (strain JCSC1435).